Reading from the N-terminus, the 581-residue chain is Pyridine nucleotide-disulfide oxidoreductase domain-containing protein 2 (581 aa).

FAD is bound at residue 38–71 (VVIGAGHNGLVAAAYLQRLGVNTAVFERRHVIGG).

The protein belongs to the carotenoid/retinoid oxidoreductase family. Interacts with COX5B; this interaction may contribute to localize PYROXD2 to the inner face of the inner mitochondrial membrane.

It is found in the mitochondrion matrix. Its function is as follows. Probable oxidoreductase that may play a role as regulator of mitochondrial function. The polypeptide is Pyridine nucleotide-disulfide oxidoreductase domain-containing protein 2 (Rattus norvegicus (Rat)).